Reading from the N-terminus, the 332-residue chain is Ribosomal RNA small subunit methyltransferase H (332 aa).

Residues 37 to 39 (GGY), D55, F82, D103, and Q110 each bind S-adenosyl-L-methionine. The segment at 281–332 (TKRPVTPSDEETAANPRARSAKLRAGERTAAPAQPEAPLPHWPTLASVMGRR) is disordered.

This sequence belongs to the methyltransferase superfamily. RsmH family.

The protein resides in the cytoplasm. It catalyses the reaction cytidine(1402) in 16S rRNA + S-adenosyl-L-methionine = N(4)-methylcytidine(1402) in 16S rRNA + S-adenosyl-L-homocysteine + H(+). Specifically methylates the N4 position of cytidine in position 1402 (C1402) of 16S rRNA. The polypeptide is Ribosomal RNA small subunit methyltransferase H (Rhodopseudomonas palustris (strain BisA53)).